The following is a 275-amino-acid chain: 2,3,4,5-tetrahydropyridine-2,6-dicarboxylate N-succinyltransferase (275 aa).

2 residues coordinate substrate: Arg-108 and Asp-145.

It belongs to the transferase hexapeptide repeat family. In terms of assembly, homotrimer.

Its subcellular location is the cytoplasm. It carries out the reaction (S)-2,3,4,5-tetrahydrodipicolinate + succinyl-CoA + H2O = (S)-2-succinylamino-6-oxoheptanedioate + CoA. It functions in the pathway amino-acid biosynthesis; L-lysine biosynthesis via DAP pathway; LL-2,6-diaminopimelate from (S)-tetrahydrodipicolinate (succinylase route): step 1/3. The chain is 2,3,4,5-tetrahydropyridine-2,6-dicarboxylate N-succinyltransferase from Jannaschia sp. (strain CCS1).